Consider the following 74-residue polypeptide: MSANGAVWGRVRSRLRAFPERLAACGAEAAAYGRCVQASTAPGGRLSKDFCAREFEALRSCFAAAAKKTLEGGC.

Residues 22–69 enclose the CHCH domain; sequence LAACGAEAAAYGRCVQASTAPGGRLSKDFCAREFEALRSCFAAAAKKT. 2 consecutive short sequence motifs (cx9C motif) follow at residues 25–35 and 51–61; these read CGAEAAAYGRC and CAREFEALRSC. Intrachain disulfides connect Cys-25–Cys-61 and Cys-35–Cys-51.

As to quaternary structure, interacts with NDUFAF5.

Its subcellular location is the mitochondrion. Functionally, involved in the assembly of mitochondrial NADH:ubiquinone oxidoreductase complex (complex I, MT-ND1). Required to stabilize NDUFAF5. The protein is NADH dehydrogenase [ubiquinone] 1 alpha subcomplex assembly factor 8 of Homo sapiens (Human).